A 78-amino-acid polypeptide reads, in one-letter code: DNA-directed RNA polymerase subunit Rpo5 (78 aa).

This sequence belongs to the archaeal Rpo5/eukaryotic RPB5 RNA polymerase subunit family. In terms of assembly, part of the RNA polymerase complex.

It localises to the cytoplasm. The enzyme catalyses RNA(n) + a ribonucleoside 5'-triphosphate = RNA(n+1) + diphosphate. Functionally, DNA-dependent RNA polymerase (RNAP) catalyzes the transcription of DNA into RNA using the four ribonucleoside triphosphates as substrates. The chain is DNA-directed RNA polymerase subunit Rpo5 from Methanosarcina barkeri (strain Fusaro / DSM 804).